Reading from the N-terminus, the 525-residue chain is Biotinidase (525 aa).

The signal sequence occupies residues 1-26; it reads MSRAGRQLALLLCSCCVAVAIPGGLA. In terms of domain architecture, CN hydrolase spans 54–333; it reads DPLALTSREQ…PGLISAGNAT (280 aa). Catalysis depends on Glu-94, which acts as the Proton acceptor. N-linked (GlcNAc...) asparagine glycosylation is found at Asn-132 and Asn-185. The Proton donor role is filled by Lys-194. Cys-227 serves as the catalytic Nucleophile. A glycan (N-linked (GlcNAc...) asparagine) is linked at Asn-384.

The protein belongs to the carbon-nitrogen hydrolase superfamily. BTD/VNN family.

The protein localises to the secreted. It is found in the extracellular space. The catalysed reaction is biocytin + H2O = biotin + L-lysine. The enzyme catalyses biotin amide + H2O = biotin + NH4(+). Functionally, catalytic release of biotin from biocytin, the product of biotin-dependent carboxylases degradation. This chain is Biotinidase (BTD), found in Bos taurus (Bovine).